Consider the following 329-residue polypeptide: Ribosomal RNA small subunit methyltransferase H (329 aa).

S-adenosyl-L-methionine-binding positions include 46–48, aspartate 65, phenylalanine 92, aspartate 113, and histidine 120; that span reads GGH. The interval 295–329 is disordered; the sequence is RGAERPSPAEVAANPRAASARLRAAEKIRDTREAA. Over residues 317 to 329 the composition is skewed to basic and acidic residues; the sequence is RAAEKIRDTREAA.

This sequence belongs to the methyltransferase superfamily. RsmH family.

The protein localises to the cytoplasm. The enzyme catalyses cytidine(1402) in 16S rRNA + S-adenosyl-L-methionine = N(4)-methylcytidine(1402) in 16S rRNA + S-adenosyl-L-homocysteine + H(+). Specifically methylates the N4 position of cytidine in position 1402 (C1402) of 16S rRNA. The chain is Ribosomal RNA small subunit methyltransferase H from Acidothermus cellulolyticus (strain ATCC 43068 / DSM 8971 / 11B).